The sequence spans 509 residues: MEELQGYLKIDRSRERDFLYPLLFQEYIYALAHDHGLNKSILYEPMENLGYDKKYSLIIVKRLITRMYQQKHLIILTNDSNPNFFFGHNKNLDSQMISEGVAVIVELPFSLRLVSSPESKEIDKSMTTLRSIHSIFPFLEDKLLHLNHVLDILIPYPIHLELLVQTLRSWIQDAPFLHLLRFFLYKYHNWNSLITQKTKMILFFSKENQRFFLFLYNFHVYESESIFVFLRKQSYHLRSTSSRAFLDRTHFYRKIEHFLVDFRNDFHTILWLFKDPFIQYFRFQGKSILSSKGTPLLMKKWKYYLVNLWECHFYFWSQPDRIHINQLSNHFIDFLGYLSSVRPTPSAVRSQMLEKSFFIDIVIKKFDTRVPIIPLIGSLAKAKFCNFSGHPISKPAWADSSDSDIIDRFGRICRNLSHYYSGSSKKKSLYRIKYILRLSCARTLARKHKSTVRSFLKRLGSEFLEEFLMEEEQVLSFILPRISYFSKRLYKERIWYFDIIRINDLTNLS.

The protein belongs to the intron maturase 2 family. MatK subfamily.

It is found in the plastid. It localises to the chloroplast. Usually encoded in the trnK tRNA gene intron. Probably assists in splicing its own and other chloroplast group II introns. This Clematis vitalba (Evergreen clematis) protein is Maturase K.